The primary structure comprises 492 residues: Catalase isozyme 2 (492 aa).

Active-site residues include histidine 65 and asparagine 138. Residue tyrosine 348 participates in heme binding.

It belongs to the catalase family. In terms of assembly, homotetramer. Heme serves as cofactor.

The protein localises to the peroxisome. Its subcellular location is the glyoxysome. It catalyses the reaction 2 H2O2 = O2 + 2 H2O. Its function is as follows. Occurs in almost all aerobically respiring organisms and serves to protect cells from the toxic effects of hydrogen peroxide. This Solanum tuberosum (Potato) protein is Catalase isozyme 2 (CAT2).